An 84-amino-acid chain; its full sequence is Small ribosomal subunit protein uS17 (84 aa).

The protein belongs to the universal ribosomal protein uS17 family. Part of the 30S ribosomal subunit.

Its function is as follows. One of the primary rRNA binding proteins, it binds specifically to the 5'-end of 16S ribosomal RNA. This chain is Small ribosomal subunit protein uS17, found in Glaesserella parasuis serovar 5 (strain SH0165) (Haemophilus parasuis).